The chain runs to 135 residues: Centromere protein S (135 aa).

Residues 103–135 (SLEQKEKKKKKSVSGGNVSRNSDMDTVVPESKD) are disordered.

The protein belongs to the TAF9 family. CENP-S/MHF1 subfamily. In terms of assembly, heterodimer with CENPX, sometimes called MHF; this interaction stabilizes both partners. MHF heterodimers can assemble to form tetrameric structures. MHF also coassemble with CENPT-CENPW heterodimers at centromeres to form the tetrameric CENP-T-W-S-X complex. Forms a discrete complex with FANCM and CENPX, called FANCM-MHF; this interaction, probably mediated by direct binding between CENPS and FANCM, leads to synergistic activation of double-stranded DNA binding and strongly stimulates FANCM-mediated DNA remodeling. Recruited by FANCM to the Fanconi anemia (FA) core complex, which consists of CENPS, CENPX, FANCA, FANCB, FANCC, FANCE, FANCF, FANCG, FANCL, FANCM, FAAP24 and FAAP100. The FA core complex associates with Bloom syndrome (BLM) complex, which consists of at least BLM, DNA topoisomerase 3-alpha (TOP3A), RMI1/BLAP75, RPA1/RPA70 and RPA2/RPA32. The super complex between FA and BLM is called BRAFT. Component of the CENPA-CAD complex, composed of CENPI, CENPK, CENPL, CENPO, CENPP, CENPQ, CENPR and CENPS. The CENPA-CAD complex is probably recruited on centromeres by the CENPA-NAC complex, at least composed of CENPA, CENPC, CENPH, CENPM, CENPN, CENPT and CENPU.

The protein localises to the nucleus. It is found in the chromosome. Its subcellular location is the centromere. The protein resides in the kinetochore. Functionally, DNA-binding component of the Fanconi anemia (FA) core complex. Required for the normal activation of the FA pathway, leading to monoubiquitination of the FANCI-FANCD2 complex in response to DNA damage, cellular resistance to DNA cross-linking drugs, and prevention of chromosomal breakage. In complex with CENPX (MHF heterodimer), crucial cofactor for FANCM in both binding and ATP-dependent remodeling of DNA. Stabilizes FANCM. In complex with CENPX and FANCM (but not other FANC proteins), rapidly recruited to blocked forks and promotes gene conversion at blocked replication forks. In complex with CENPT, CENPW and CENPX (CENP-T-W-S-X heterotetramer), involved in the formation of a functional kinetochore outer plate, which is essential for kinetochore-microtubule attachment and faithful mitotic progression. As a component of MHF and CENP-T-W-S-X complexes, binds DNA and bends it to form a nucleosome-like structure. DNA-binding function is fulfilled in the presence of CENPX, with the following preference for DNA substates: Holliday junction &gt; double-stranded &gt; splay arm &gt; single-stranded. Does not bind DNA on its own. The polypeptide is Centromere protein S (cenps) (Xenopus laevis (African clawed frog)).